The chain runs to 262 residues: Apolipoprotein A-I-2 (262 aa).

The signal sequence occupies residues 1–18 (MQFLALALTILLAAATQA). The 3 X approximate tandem repeats stretch occupies residues 32–63 (VKVAMMEYMAQVKETAQRSIDHLDDTEYKEYK). Tandem repeats lie at residues 64–85 (VQLSQSLDNLQQYAQTASESLA) and 87–107 (YSEAIGVQLTEATAAVRAEVM). Residues 64 to 262 (VQLSQSLDNL…YETISQAMKA (199 aa)) form a 10 X approximate tandem repeats region. Residues 108-118 (KDVEELRSQLE) form a 3; half-length repeat. 5 consecutive repeat copies span residues 119–140 (PKRAELKEVLDKHIDEYRKRLE), 141–162 (PLIKDIVEQRRTELEAFRVKIE), 163–184 (PVVEEMRAKVSANVEETKAKLM), 185–206 (PIVETVRAKLTERLEELRTLAS), and 207–228 (PYAEEYKEQMVKAVGEVREKVV). Residues 229-239 (PLTTDFKGQLG) form a 9; half-length repeat. The stretch at 240 to 262 (PAAEQAKEKLMALYETISQAMKA) is repeat 10.

This sequence belongs to the apolipoprotein A1/A4/E family.

It localises to the secreted. In terms of biological role, participates in the reverse transport of cholesterol from tissues to the liver for excretion by promoting cholesterol efflux from tissues and by acting as a cofactor for the lecithin cholesterol acyltransferase (LCAT). This Oncorhynchus mykiss (Rainbow trout) protein is Apolipoprotein A-I-2.